The sequence spans 132 residues: Riboflavin kinase (132 aa).

CDP is bound at residue 13-18 (GLGHGS). Residues Thr40 and Asn42 each coordinate Mg(2+). Residues Thr98 and Glu106 each contribute to the FMN site. 111–114 (VYLR) is a binding site for CDP.

The protein belongs to the archaeal riboflavin kinase family. Mg(2+) is required as a cofactor.

It catalyses the reaction riboflavin + CTP = CDP + FMN + H(+). Its pathway is cofactor biosynthesis; FMN biosynthesis; FMN from riboflavin (CTP route): step 1/1. In terms of biological role, catalyzes the CTP-dependent phosphorylation of riboflavin (vitamin B2) to form flavin mononucleotide (FMN). The polypeptide is Riboflavin kinase (Aeropyrum pernix (strain ATCC 700893 / DSM 11879 / JCM 9820 / NBRC 100138 / K1)).